A 206-amino-acid polypeptide reads, in one-letter code: Imidazoleglycerol-phosphate dehydratase (206 aa).

The protein belongs to the imidazoleglycerol-phosphate dehydratase family.

Its subcellular location is the cytoplasm. It carries out the reaction D-erythro-1-(imidazol-4-yl)glycerol 3-phosphate = 3-(imidazol-4-yl)-2-oxopropyl phosphate + H2O. It functions in the pathway amino-acid biosynthesis; L-histidine biosynthesis; L-histidine from 5-phospho-alpha-D-ribose 1-diphosphate: step 6/9. This Saccharopolyspora erythraea (strain ATCC 11635 / DSM 40517 / JCM 4748 / NBRC 13426 / NCIMB 8594 / NRRL 2338) protein is Imidazoleglycerol-phosphate dehydratase.